The sequence spans 286 residues: Acyl-CoA-binding domain-containing protein 6 (286 aa).

In terms of domain architecture, ACB spans 32 to 117 (LQCQFEQAAK…VKKLDPDWSP (86 aa)). Residues 59 to 63 (YARYK), Lys-85, and Tyr-104 each bind an acyl-CoA. ANK repeat units follow at residues 182 to 211 (EGRS…HINM) and 215 to 244 (EGQT…DPSL).

The protein localises to the cytoplasm. It is found in the nucleus. Binds long-chain acyl-coenzyme A molecules with a strong preference for unsaturated C18:1-CoA. Does not bind fatty acids. Plays a role in protein N-myristoylation. The sequence is that of Acyl-CoA-binding domain-containing protein 6 (acbd6) from Xenopus laevis (African clawed frog).